We begin with the raw amino-acid sequence, 324 residues long: Phospho-N-acetylmuramoyl-pentapeptide-transferase (324 aa).

10 helical membrane-spanning segments follow: residues Ala5–Ile25, Ile57–Leu77, Thr81–Ile101, Phe117–Ser137, Trp147–Ser167, Leu176–Trp196, Val203–His223, Val227–Leu247, Leu250–Ile270, and Ile302–Val322.

It belongs to the glycosyltransferase 4 family. MraY subfamily. Requires Mg(2+) as cofactor.

The protein resides in the cell membrane. It carries out the reaction UDP-N-acetyl-alpha-D-muramoyl-L-alanyl-gamma-D-glutamyl-meso-2,6-diaminopimeloyl-D-alanyl-D-alanine + di-trans,octa-cis-undecaprenyl phosphate = di-trans,octa-cis-undecaprenyl diphospho-N-acetyl-alpha-D-muramoyl-L-alanyl-D-glutamyl-meso-2,6-diaminopimeloyl-D-alanyl-D-alanine + UMP. The protein operates within cell wall biogenesis; peptidoglycan biosynthesis. Catalyzes the initial step of the lipid cycle reactions in the biosynthesis of the cell wall peptidoglycan: transfers peptidoglycan precursor phospho-MurNAc-pentapeptide from UDP-MurNAc-pentapeptide onto the lipid carrier undecaprenyl phosphate, yielding undecaprenyl-pyrophosphoryl-MurNAc-pentapeptide, known as lipid I. This is Phospho-N-acetylmuramoyl-pentapeptide-transferase from Geobacillus kaustophilus (strain HTA426).